Here is a 565-residue protein sequence, read N- to C-terminus: Mediator of RNA polymerase II transcription subunit 1 (565 aa).

Positions 141-170 (SGNNLGSGNGTNGSSLTNKTDKKSVSSGNG) are disordered.

It belongs to the Mediator complex subunit 1 family. As to quaternary structure, component of the Mediator complex.

The protein resides in the nucleus. Component of the Mediator complex, a coactivator involved in the regulated transcription of nearly all RNA polymerase II-dependent genes. Mediator functions as a bridge to convey information from gene-specific regulatory proteins to the basal RNA polymerase II transcription machinery. Mediator is recruited to promoters by direct interactions with regulatory proteins and serves as a scaffold for the assembly of a functional preinitiation complex with RNA polymerase II and the general transcription factors. The protein is Mediator of RNA polymerase II transcription subunit 1 (MED1) of Candida glabrata (strain ATCC 2001 / BCRC 20586 / JCM 3761 / NBRC 0622 / NRRL Y-65 / CBS 138) (Yeast).